The primary structure comprises 651 residues: Mediator of RNA polymerase II transcription subunit 17 (651 aa).

A disordered region spans residues Q51–E83.

Belongs to the Mediator complex subunit 17 family. Interacts with GATA1 and PPARG. Component of the Mediator complex, which is composed of MED1, MED4, MED6, MED7, MED8, MED9, MED10, MED11, MED12, MED13, MED13L, MED14, MED15, MED16, MED17, MED18, MED19, MED20, MED21, MED22, MED23, MED24, MED25, MED26, MED27, MED29, MED30, MED31, CCNC, CDK8 and CDC2L6/CDK11. The MED12, MED13, CCNC and CDK8 subunits form a distinct module termed the CDK8 module. Mediator containing the CDK8 module is less active than Mediator lacking this module in supporting transcriptional activation. Individual preparations of the Mediator complex lacking one or more distinct subunits have been variously termed ARC, CRSP, DRIP, PC2, SMCC and TRAP. Interacts with STAT2. In terms of tissue distribution, ubiquitous.

The protein resides in the nucleus. In terms of biological role, component of the Mediator complex, a coactivator involved in the regulated transcription of nearly all RNA polymerase II-dependent genes. Mediator functions as a bridge to convey information from gene-specific regulatory proteins to the basal RNA polymerase II transcription machinery. Mediator is recruited to promoters by direct interactions with regulatory proteins and serves as a scaffold for the assembly of a functional preinitiation complex with RNA polymerase II and the general transcription factors. The protein is Mediator of RNA polymerase II transcription subunit 17 (MED17) of Homo sapiens (Human).